The primary structure comprises 954 residues: Patched domain-containing protein 3 (954 aa).

The segment covering 1-20 (MPWVEPKPRPGPEQKPKLTK) has biased composition (basic and acidic residues). The tract at residues 1–103 (MPWVEPKPRP…APLPEEETPE (103 aa)) is disordered. The span at 42 to 57 (QPPPGPLAPPKSPEPS) shows a compositional bias: pro residues. Positions 90–102 (ELDDAPLPEEETP) are enriched in acidic residues. Residues 139-159 (WIFLLAPLMLTAALGTGFLYL) form a helical membrane-spanning segment. N-linked (GlcNAc...) asparagine glycans are attached at residues N192, N275, and N279. 7 consecutive transmembrane segments (helical) span residues 297–317 (LTGF…QLLL), 383–403 (VIPV…TSCF), 423–443 (FLAV…FVII), 447–467 (SPFL…SAWH), 486–506 (AAVS…TGIM), 520–540 (GMTL…FMAL), and 603–623 (YFVV…CFHV). Positions 383–540 (VIPVFHLAYI…ITCFGAFMAL (158 aa)) constitute an SSD domain. Residues N678, N692, and N737 are each glycosylated (N-linked (GlcNAc...) asparagine). Helical transmembrane passes span 804–824 (VLVA…YPLC), 826–846 (LWVT…MAFW), 858–878 (LVIC…AFVS), 894–914 (LLGY…CVLA), and 927–947 (IMFL…PVFL).

It belongs to the patched family. Expressed in germ cells of the testis (at protein level). Detected in blood lymph, colon, small intestine, ovary, testis, prostate, thymus and spleen with highest levels in testis.

The protein localises to the cell projection. Its subcellular location is the cilium. It is found in the flagellum membrane. The protein resides in the endoplasmic reticulum membrane. In terms of biological role, may play a role in sperm development or sperm function. However, does not appear to have an essential role in spermatogenesis or male fertility. The chain is Patched domain-containing protein 3 (PTCHD3) from Homo sapiens (Human).